We begin with the raw amino-acid sequence, 155 residues long: 6,7-dimethyl-8-ribityllumazine synthase (155 aa).

5-amino-6-(D-ribitylamino)uracil is bound by residues Phe-18, 49-51 (ALE), and 75-77 (CVI). 80–81 (ET) provides a ligand contact to (2S)-2-hydroxy-3-oxobutyl phosphate. His-83 acts as the Proton donor in catalysis. Residue Asn-108 participates in 5-amino-6-(D-ribitylamino)uracil binding. Residue Arg-122 coordinates (2S)-2-hydroxy-3-oxobutyl phosphate.

It belongs to the DMRL synthase family.

The enzyme catalyses (2S)-2-hydroxy-3-oxobutyl phosphate + 5-amino-6-(D-ribitylamino)uracil = 6,7-dimethyl-8-(1-D-ribityl)lumazine + phosphate + 2 H2O + H(+). It participates in cofactor biosynthesis; riboflavin biosynthesis; riboflavin from 2-hydroxy-3-oxobutyl phosphate and 5-amino-6-(D-ribitylamino)uracil: step 1/2. Functionally, catalyzes the formation of 6,7-dimethyl-8-ribityllumazine by condensation of 5-amino-6-(D-ribitylamino)uracil with 3,4-dihydroxy-2-butanone 4-phosphate. This is the penultimate step in the biosynthesis of riboflavin. The chain is 6,7-dimethyl-8-ribityllumazine synthase from Bartonella henselae (strain ATCC 49882 / DSM 28221 / CCUG 30454 / Houston 1) (Rochalimaea henselae).